A 360-amino-acid chain; its full sequence is Inward rectifier potassium channel 13 (360 aa).

Topologically, residues 1–50 (MDSRNCKVNAPLLSQRYRRMVTKDGHSTLQMDGAQRGLVYLRDAWGILMD) are cytoplasmic. A helical transmembrane segment spans residues 51-77 (MRWRWMMLVFSASFVVHWLVFAVLWYA). Residues 78–105 (VAEMNGDLEIDHDVPPENHTICVKHITS) are Extracellular-facing. The helical; Pore-forming intramembrane region spans 106 to 122 (FTAAFSFSLETQLTIGY). Positions 119–124 (TIGYGT) match the Selectivity filter motif. Residues 123-131 (GTMFPSGDC) lie on the Extracellular side of the membrane. Residues 132–157 (PSAIALLAIQMLLGLMLEAFITGAFV) traverse the membrane as a helical segment. The Cytoplasmic segment spans residues 158 to 360 (AKIARPKNRA…FQIAETGLTE (203 aa)). Residue S201 is modified to Phosphoserine; by PKC. Residue S287 is modified to Phosphoserine; by PKA.

Belongs to the inward rectifier-type potassium channel (TC 1.A.2.1) family. KCNJ13 subfamily. As to quaternary structure, homotetramer. Interacts with RAB28; the interaction may facilitate cone outer segments phagocytosis. In terms of processing, phosphorylation at Ser-201 by PKC strongly inhibits ionic currents, while phosphorylation at Ser-287 by PKA increases them.

The protein resides in the membrane. It is found in the cell membrane. It carries out the reaction K(+)(in) = K(+)(out). Its activity is regulated as follows. Inhibited by Ba(2+) and Cs(+), although sensitivity to those inhibitors is much lower than in other Kir channels. Inward rectifier potassium channels are characterized by a greater tendency to allow potassium to flow into the cell rather than out of it. Their voltage dependence is regulated by the concentration of extracellular potassium; as external potassium is raised, the voltage range of the channel opening shifts to more positive voltages. The inward rectification is mainly due to the blockage of outward current by internal magnesium. KCNJ13 has a very low single channel conductance, low sensitivity to block by external barium and cesium, and no dependence of its inward rectification properties on the internal blocking particle magnesium. The sequence is that of Inward rectifier potassium channel 13 (Kcnj13) from Rattus norvegicus (Rat).